The sequence spans 473 residues: Anthocyanidin 5,3-O-glucosyltransferase (473 aa).

It belongs to the UDP-glycosyltransferase family.

Its pathway is pigment biosynthesis; anthocyanin biosynthesis. Functionally, sequentially catalyzes two glycosylation steps at the 5-OH and 3-OH positions of anthocyanidin. Unglycosylated anthocyanidin or anthocyanidin 5-O-glucoside, but not anthocyanidin 3-O-glucoside, can be used as glucosyl acceptor. This is Anthocyanidin 5,3-O-glucosyltransferase (RhGT1) from Rosa hybrid cultivar.